We begin with the raw amino-acid sequence, 186 residues long: Protein C (186 aa).

Residues 1–15 are compositionally biased toward polar residues; it reads MSKTDWNASGLSRPS. Positions 1-44 are disordered; the sequence is MSKTDWNASGLSRPSPSAHWPSRKLWQHGQKYQTTQDRSEPPAG.

The protein belongs to the morbillivirus protein C family. Interacts with the phosphoprotein (via C-terminus); this interaction allows C to associate with the ribonucleocapsid.

The protein localises to the host nucleus. The protein resides in the host cytoplasmic vesicle. Ribonucleocapsid-associated protein that interacts with the phosphoprotein (P), thereby increasing replication accuracy and processivity of the polymerase complex. In Homo sapiens (Human), this protein is Protein C (P/V/C).